A 166-amino-acid chain; its full sequence is Large ribosomal subunit protein uL10 (166 aa).

The protein belongs to the universal ribosomal protein uL10 family. In terms of assembly, part of the ribosomal stalk of the 50S ribosomal subunit. The N-terminus interacts with L11 and the large rRNA to form the base of the stalk. The C-terminus forms an elongated spine to which L12 dimers bind in a sequential fashion forming a multimeric L10(L12)X complex.

In terms of biological role, forms part of the ribosomal stalk, playing a central role in the interaction of the ribosome with GTP-bound translation factors. This Bacillus velezensis (strain DSM 23117 / BGSC 10A6 / LMG 26770 / FZB42) (Bacillus amyloliquefaciens subsp. plantarum) protein is Large ribosomal subunit protein uL10.